A 231-amino-acid polypeptide reads, in one-letter code: Adenosylcobinamide-GDP ribazoletransferase (231 aa).

5 consecutive transmembrane segments (helical) span residues 28–48, 97–117, 121–141, 162–182, and 209–229; these read LWLF…PHFI, TGAG…TLLY, FWEI…LMLL, VFIG…ESLA, and VIGS…TIAG.

This sequence belongs to the CobS family. Requires Mg(2+) as cofactor.

It is found in the cell membrane. The enzyme catalyses alpha-ribazole + adenosylcob(III)inamide-GDP = adenosylcob(III)alamin + GMP + H(+). It carries out the reaction alpha-ribazole 5'-phosphate + adenosylcob(III)inamide-GDP = adenosylcob(III)alamin 5'-phosphate + GMP + H(+). The protein operates within cofactor biosynthesis; adenosylcobalamin biosynthesis; adenosylcobalamin from cob(II)yrinate a,c-diamide: step 7/7. Joins adenosylcobinamide-GDP and alpha-ribazole to generate adenosylcobalamin (Ado-cobalamin). Also synthesizes adenosylcobalamin 5'-phosphate from adenosylcobinamide-GDP and alpha-ribazole 5'-phosphate. The sequence is that of Adenosylcobinamide-GDP ribazoletransferase (cobS2) from Archaeoglobus fulgidus (strain ATCC 49558 / DSM 4304 / JCM 9628 / NBRC 100126 / VC-16).